The sequence spans 432 residues: Homogentisate 1,2-dioxygenase (432 aa).

His286 serves as the catalytic Proton acceptor. Positions 329 and 335 each coordinate Fe cation. Residues Tyr344 and His365 each coordinate homogentisate. His365 serves as a coordination point for Fe cation.

It belongs to the homogentisate dioxygenase family. Hexamer; dimer of trimers. It depends on Fe cation as a cofactor.

The catalysed reaction is homogentisate + O2 = 4-maleylacetoacetate + H(+). It participates in amino-acid degradation; L-phenylalanine degradation; acetoacetate and fumarate from L-phenylalanine: step 4/6. In terms of biological role, involved in the catabolism of homogentisate (2,5-dihydroxyphenylacetate or 2,5-OH-PhAc), a central intermediate in the degradation of phenylalanine and tyrosine. Catalyzes the oxidative ring cleavage of the aromatic ring of homogentisate to yield maleylacetoacetate. The chain is Homogentisate 1,2-dioxygenase from Bordetella petrii (strain ATCC BAA-461 / DSM 12804 / CCUG 43448).